The primary structure comprises 620 residues: 1-deoxy-D-xylulose-5-phosphate synthase (620 aa).

Thiamine diphosphate is bound by residues histidine 80 and 121–123 (GHS). Aspartate 152 contacts Mg(2+). Thiamine diphosphate contacts are provided by residues 153-154 (GA), asparagine 181, tyrosine 288, and glutamate 370. Asparagine 181 serves as a coordination point for Mg(2+).

It belongs to the transketolase family. DXPS subfamily. In terms of assembly, homodimer. Mg(2+) is required as a cofactor. The cofactor is thiamine diphosphate.

It catalyses the reaction D-glyceraldehyde 3-phosphate + pyruvate + H(+) = 1-deoxy-D-xylulose 5-phosphate + CO2. It participates in metabolic intermediate biosynthesis; 1-deoxy-D-xylulose 5-phosphate biosynthesis; 1-deoxy-D-xylulose 5-phosphate from D-glyceraldehyde 3-phosphate and pyruvate: step 1/1. In terms of biological role, catalyzes the acyloin condensation reaction between C atoms 2 and 3 of pyruvate and glyceraldehyde 3-phosphate to yield 1-deoxy-D-xylulose-5-phosphate (DXP). This Salmonella arizonae (strain ATCC BAA-731 / CDC346-86 / RSK2980) protein is 1-deoxy-D-xylulose-5-phosphate synthase.